The following is a 50-amino-acid chain: Peptide encoded by miPEP319a (50 aa).

Its function is as follows. Regulatory peptide encoded by the primary transcript (pri-miR319a) of the microRNA miR319a that enhances the accumulation of its corresponding mature miRNA. Acts probably as a transcriptional activator of its corresponding pri-miRNA. The chain is Peptide encoded by miPEP319a from Arabidopsis thaliana (Mouse-ear cress).